We begin with the raw amino-acid sequence, 191 residues long: MDVWKRQRLQECRELCPLPVLMSLSNMFSKIEIVYVKYLFKMDFSTMYRYILPALTLSMTVTKSLVIEMLFILKRWEDIDQFFRLNIRKVNDCFIVAQFNHIPIKRKLIVLLYMLTSRQEKQLFLNMIYAFLEKSHLRLGDDEEQNAIRFFSYVDDLHLTRDILLEMIHKLKNTEINQTMELLLSYNELAR.

The chain crosses the membrane as a helical span at residues Y50 to I72.

It is found in the membrane. This is an uncharacterized protein from Human herpesvirus 6A (strain Uganda-1102) (HHV-6 variant A).